Consider the following 303-residue polypeptide: N-acetyl-D-glucosamine kinase (303 aa).

Residues 4-11 (GFDIGGTK) and 133-140 (GVGGGLVL) contribute to the ATP site. Zn(2+) contacts are provided by His-157, Cys-177, Cys-179, and Cys-184.

This sequence belongs to the ROK (NagC/XylR) family. NagK subfamily.

The enzyme catalyses N-acetyl-D-glucosamine + ATP = N-acetyl-D-glucosamine 6-phosphate + ADP + H(+). The protein operates within cell wall biogenesis; peptidoglycan recycling. In terms of biological role, catalyzes the phosphorylation of N-acetyl-D-glucosamine (GlcNAc) derived from cell-wall degradation, yielding GlcNAc-6-P. The polypeptide is N-acetyl-D-glucosamine kinase (Salmonella paratyphi A (strain ATCC 9150 / SARB42)).